The primary structure comprises 241 residues: Aspartate/glutamate leucyltransferase (241 aa).

The protein belongs to the R-transferase family. Bpt subfamily.

The protein localises to the cytoplasm. The catalysed reaction is N-terminal L-glutamyl-[protein] + L-leucyl-tRNA(Leu) = N-terminal L-leucyl-L-glutamyl-[protein] + tRNA(Leu) + H(+). It carries out the reaction N-terminal L-aspartyl-[protein] + L-leucyl-tRNA(Leu) = N-terminal L-leucyl-L-aspartyl-[protein] + tRNA(Leu) + H(+). Functionally, functions in the N-end rule pathway of protein degradation where it conjugates Leu from its aminoacyl-tRNA to the N-termini of proteins containing an N-terminal aspartate or glutamate. The sequence is that of Aspartate/glutamate leucyltransferase from Helicobacter hepaticus (strain ATCC 51449 / 3B1).